Reading from the N-terminus, the 747-residue chain is Pentatricopeptide repeat-containing protein At5g39710 (747 aa).

PPR repeat units follow at residues 133-167 (TSSV…GFMP), 168-203 (GVLS…QVSP), 204-238 (NVFT…GCLP), 239-273 (NVVT…GLEP), 274-308 (NLIS…GYSL), 309-343 (DEVT…GLTP), 344-378 (SVIT…GLCP), 379-413 (NERT…GFSP), 414-448 (SVVT…GLSP), 449-483 (DVVS…GIKP), 484-518 (DTIT…GLPP), 519-553 (DEFT…GVLP), 554-588 (DVVT…ESVP), 604-638 (EFKS…NHKP), and 639-673 (DGTA…GFLL).

It belongs to the PPR family. P subfamily.

The sequence is that of Pentatricopeptide repeat-containing protein At5g39710 (EMB2745) from Arabidopsis thaliana (Mouse-ear cress).